Consider the following 62-residue polypeptide: Photosystem II reaction center protein Z (62 aa).

A run of 2 helical transmembrane segments spans residues 8–28 (AVFA…VVFA) and 41–61 (FSGT…NSLI).

The protein belongs to the PsbZ family. As to quaternary structure, PSII is composed of 1 copy each of membrane proteins PsbA, PsbB, PsbC, PsbD, PsbE, PsbF, PsbH, PsbI, PsbJ, PsbK, PsbL, PsbM, PsbT, PsbY, PsbZ, Psb30/Ycf12, at least 3 peripheral proteins of the oxygen-evolving complex and a large number of cofactors. It forms dimeric complexes.

The protein localises to the plastid. It is found in the chloroplast thylakoid membrane. May control the interaction of photosystem II (PSII) cores with the light-harvesting antenna, regulates electron flow through the 2 photosystem reaction centers. PSII is a light-driven water plastoquinone oxidoreductase, using light energy to abstract electrons from H(2)O, generating a proton gradient subsequently used for ATP formation. The sequence is that of Photosystem II reaction center protein Z from Citrus sinensis (Sweet orange).